The following is a 524-amino-acid chain: CTP synthase (524 aa).

Residues 1–263 (MKKYVIVTGG…HEKIASKLNV (263 aa)) form an amidoligase domain region. Ser-13 contributes to the CTP binding site. Ser-13 is a binding site for UTP. ATP contacts are provided by residues 14 to 19 (GIGKGI) and Asp-71. Mg(2+)-binding residues include Asp-71 and Glu-137. CTP-binding positions include 144–146 (DIE), 184–189 (KTKPTQ), and Lys-220. Residues 184–189 (KTKPTQ) and Lys-220 each bind UTP. Positions 282-524 (RIALVGKYLG…YLRKVLEGSQ (243 aa)) constitute a Glutamine amidotransferase type-1 domain. Position 342 (Gly-342) interacts with L-glutamine. The Nucleophile; for glutamine hydrolysis role is filled by Cys-369. L-glutamine is bound by residues 370-373 (LGMQ), Glu-393, and Arg-451. Residues His-499 and Glu-501 contribute to the active site.

This sequence belongs to the CTP synthase family. As to quaternary structure, homotetramer.

The enzyme catalyses UTP + L-glutamine + ATP + H2O = CTP + L-glutamate + ADP + phosphate + 2 H(+). It carries out the reaction L-glutamine + H2O = L-glutamate + NH4(+). The catalysed reaction is UTP + NH4(+) + ATP = CTP + ADP + phosphate + 2 H(+). It functions in the pathway pyrimidine metabolism; CTP biosynthesis via de novo pathway; CTP from UDP: step 2/2. Its activity is regulated as follows. Allosterically activated by GTP, when glutamine is the substrate; GTP has no effect on the reaction when ammonia is the substrate. The allosteric effector GTP functions by stabilizing the protein conformation that binds the tetrahedral intermediate(s) formed during glutamine hydrolysis. Inhibited by the product CTP, via allosteric rather than competitive inhibition. Its function is as follows. Catalyzes the ATP-dependent amination of UTP to CTP with either L-glutamine or ammonia as the source of nitrogen. Regulates intracellular CTP levels through interactions with the four ribonucleotide triphosphates. The sequence is that of CTP synthase from Thermotoga maritima (strain ATCC 43589 / DSM 3109 / JCM 10099 / NBRC 100826 / MSB8).